We begin with the raw amino-acid sequence, 298 residues long: Protoheme IX farnesyltransferase (298 aa).

A run of 8 helical transmembrane segments spans residues 23-43 (VTQLAVFCAVIGMFLAVPGLP), 49-69 (LFGTIGIWLLAAAAFAINCLI), 95-115 (VLSLSGLLGGAGMLVLYHLVN), 117-137 (LTMWLTFATFVGYAVIYTVIL), 144-164 (NIVIGGLSGAMPPALGWASVA), 171-191 (AWVLVLIIFIWTPPHFWALAL), 234-254 (FMHMNGLLYLLAAVILGGIFV), and 276-296 (SILYLALLFGALLVDHWVGVL).

Belongs to the UbiA prenyltransferase family. Protoheme IX farnesyltransferase subfamily.

It is found in the cell inner membrane. It catalyses the reaction heme b + (2E,6E)-farnesyl diphosphate + H2O = Fe(II)-heme o + diphosphate. It functions in the pathway porphyrin-containing compound metabolism; heme O biosynthesis; heme O from protoheme: step 1/1. In terms of biological role, converts heme B (protoheme IX) to heme O by substitution of the vinyl group on carbon 2 of heme B porphyrin ring with a hydroxyethyl farnesyl side group. The protein is Protoheme IX farnesyltransferase of Bordetella avium (strain 197N).